Reading from the N-terminus, the 603-residue chain is Replication protein A 70 kDa DNA-binding subunit (603 aa).

The interval 131-152 (PKPAVTSNSKPIAKKEPSHNNN) is disordered. The residue at position 160 (S160) is a Phosphoserine. A DNA-binding region (OB) is located at residues 179–252 (WVIKARVTSK…QLKPANKQYS (74 aa)). The residue at position 420 (S420) is a Phosphoserine. The segment at 464–486 (CPQSDCNKKVVDEGNDQFRCEKC) adopts a C4-type zinc-finger fold.

It belongs to the replication factor A protein 1 family. As to quaternary structure, component of the heterotrimeric canonical replication protein A complex (RPA).

The protein resides in the nucleus. In terms of biological role, as part of the heterotrimeric replication protein A complex (RPA/RP-A), binds and stabilizes single-stranded DNA intermediates, that form during DNA replication or upon DNA stress. It prevents their reannealing and in parallel, recruits and activates different proteins and complexes involved in DNA metabolism. Thereby, it plays an essential role both in DNA replication and the cellular response to DNA damage. This chain is Replication protein A 70 kDa DNA-binding subunit, found in Drosophila melanogaster (Fruit fly).